The primary structure comprises 1181 residues: 1-phosphatidylinositol 4,5-bisphosphate phosphodiesterase beta-2 (1181 aa).

The PI-PLC X-box domain maps to 312 to 463 (QDMTQPLNHY…LRGKILIKNK (152 aa)). His327 is a catalytic residue. 3 residues coordinate Ca(2+): Asn328, Glu357, and Asp359. Residue His374 is part of the active site. Residue Glu408 participates in Ca(2+) binding. Residues 465 to 534 (NQFSGPASPS…EEIKKMQSDE (70 aa)) are disordered. A compositionally biased stretch (acidic residues) spans 503–525 (TEVEEEEVVEEEEEEESGNLDEE). The PI-PLC Y-box domain maps to 547–663 (MSSLVNYIQP…GYLLKHEFMR (117 aa)). The region spanning 666–791 (DKQFNPFSVD…CLRSESNMAL (126 aa)) is the C2 domain. Residues 847–890 (SGTPVASQSNGAPVSAGNGSTAPGTKATGEEATKEVTEPQTASL) are disordered. Positions 850–869 (PVASQSNGAPVSAGNGSTAP) are enriched in polar residues. Positions 874–883 (TGEEATKEVT) are enriched in basic and acidic residues. Positions 893 to 940 (LRELKGVVKLQRRHEKELRELERRGARRWEELLQRGAAQLAELQTQAA) form a coiled coil. Ser950 carries the post-translational modification Phosphoserine. 2 coiled-coil regions span residues 974 to 1026 (PRVQ…AELK) and 1075 to 1141 (HIQE…VRAY). Residues 1149–1181 (EAEDKPERSCEASEESCPQEPLVSKADTQESRL) are disordered. Basic and acidic residues predominate over residues 1150–1159 (AEDKPERSCE).

In terms of assembly, interacts with RAC1. Forms a complex composed of at least WDR26, a G-beta:gamma unit, and PLCB2. Ca(2+) serves as cofactor.

The catalysed reaction is a 1,2-diacyl-sn-glycero-3-phospho-(1D-myo-inositol-4,5-bisphosphate) + H2O = 1D-myo-inositol 1,4,5-trisphosphate + a 1,2-diacyl-sn-glycerol + H(+). It catalyses the reaction a 1,2-diacyl-sn-glycero-3-phospho-(1D-myo-inositol) + H2O = 1D-myo-inositol 1-phosphate + a 1,2-diacyl-sn-glycerol + H(+). The production of the second messenger molecules diacylglycerol (DAG) and inositol 1,4,5-trisphosphate (IP3) is mediated by activated phosphatidylinositol-specific phospholipase C enzymes. In neutrophils, participates in a phospholipase C-activating N-formyl peptide-activated GPCR (G protein-coupled receptor) signaling pathway by promoting RASGRP4 activation by DAG, to promote neutrophil functional responses. This is 1-phosphatidylinositol 4,5-bisphosphate phosphodiesterase beta-2 from Mus musculus (Mouse).